A 138-amino-acid chain; its full sequence is Mini-ribonuclease 3 (138 aa).

Residue aspartate 33 is part of the active site.

Belongs to the MrnC RNase family. As to quaternary structure, homodimer. The cofactor is Mg(2+).

The protein localises to the cytoplasm. Involved in correct processing of both the 5' and 3' ends of 23S rRNA precursor. Processes 30S rRNA precursor transcript even in absence of ribonuclease 3 (Rnc); Rnc processes 30S rRNA into smaller rRNA precursors. The protein is Mini-ribonuclease 3 of Synechococcus sp. (strain ATCC 27144 / PCC 6301 / SAUG 1402/1) (Anacystis nidulans).